The primary structure comprises 142 residues: Putative pre-16S rRNA nuclease (142 aa).

It belongs to the YqgF nuclease family.

It localises to the cytoplasm. Its function is as follows. Could be a nuclease involved in processing of the 5'-end of pre-16S rRNA. The polypeptide is Putative pre-16S rRNA nuclease (Lactobacillus acidophilus (strain ATCC 700396 / NCK56 / N2 / NCFM)).